Consider the following 150-residue polypeptide: MKSKRHTKILEIISSKEIETQEDLAEELKLQGFDVTQATVSRDIKNLKLIKIQGASGNYKYVVSSGEEKNIIDRLSNILSNTVISAENVDKMVVIKTLSGSGSAAAEAIDNLEGADVAGTVAGDNTIFILLRSLEKAEELVAKIRKRISI.

The protein belongs to the ArgR family.

It localises to the cytoplasm. It participates in amino-acid biosynthesis; L-arginine biosynthesis [regulation]. Regulates arginine biosynthesis genes. This is Arginine repressor from Clostridium botulinum (strain Alaska E43 / Type E3).